We begin with the raw amino-acid sequence, 385 residues long: Histidinol-phosphate aminotransferase (385 aa).

An N6-(pyridoxal phosphate)lysine modification is found at lysine 230.

Belongs to the class-II pyridoxal-phosphate-dependent aminotransferase family. Requires pyridoxal 5'-phosphate as cofactor.

It carries out the reaction L-histidinol phosphate + 2-oxoglutarate = 3-(imidazol-4-yl)-2-oxopropyl phosphate + L-glutamate. The protein operates within amino-acid biosynthesis; L-histidine biosynthesis; L-histidine from 5-phospho-alpha-D-ribose 1-diphosphate: step 7/9. This chain is Histidinol-phosphate aminotransferase, found in Saccharomyces cerevisiae (strain ATCC 204508 / S288c) (Baker's yeast).